The sequence spans 323 residues: Ubiquinone biosynthesis protein COQ4, mitochondrial (323 aa).

Zn(2+) contacts are provided by His205, Asp206, His209, and Glu221.

The protein belongs to the COQ4 family. Component of a multi-subunit COQ enzyme complex, composed of at least COQ3, COQ4, COQ5, COQ6, COQ7 and COQ9. It depends on Zn(2+) as a cofactor.

The protein localises to the mitochondrion inner membrane. It catalyses the reaction a 4-hydroxy-3-methoxy-5-(all-trans-polyprenyl)benzoate + H(+) = a 2-methoxy-6-(all-trans-polyprenyl)phenol + CO2. The protein operates within cofactor biosynthesis; ubiquinone biosynthesis. Its function is as follows. Lyase that catalyzes the C1-decarboxylation of 4-hydroxy-3-methoxy-5-(all-trans-polyprenyl)benzoic acid into 2-methoxy-6-(all-trans-polyprenyl)phenol during ubiquinone biosynthesis. This is Ubiquinone biosynthesis protein COQ4, mitochondrial from Candida albicans (strain SC5314 / ATCC MYA-2876) (Yeast).